The sequence spans 471 residues: Retinoic acid receptor RXR-beta-A (471 aa).

Residues 1–34 (MGDSRDSRSPDSSSVSSPPSGQRSPPLAPSAAAM) are disordered. The segment at 1 to 102 (MGDSRDSRSP…HAVSSSDDVK (102 aa)) is modulating. Over residues 10–25 (PDSSSVSSPPSGQRSP) the composition is skewed to low complexity. Positions 122-197 (KRLCAICGDR…MGMKREVVQD (76 aa)) form a DNA-binding region, nuclear receptor. 2 consecutive NR C4-type zinc fingers follow at residues 125 to 145 (CAIC…CEGC) and 161 to 185 (CRDN…YQKC). Residues 196–216 (QDERQRSVQEERQRNKERDGE) show a composition bias toward basic and acidic residues. The segment at 196–226 (QDERQRSVQEERQRNKERDGEVESSSAANEE) is disordered. The tract at residues 198 to 221 (ERQRSVQEERQRNKERDGEVESSS) is hinge. The NR LBD domain maps to 224–467 (NEEMPVEKIL…TFLMEMLEAP (244 aa)).

This sequence belongs to the nuclear hormone receptor family. NR2 subfamily. Homodimer. Heterodimer; with a rar molecule. Binds DNA preferentially as a rar/rxr heterodimer. Heterodimerizes with rarga. In terms of tissue distribution, shows uniform expression from the blastula to mid-gastrula stages. At 12 hours post-fertilization (hpf), expressed ubiquitously but more weakly. At 24 hpf, restricted to the ventral diencephalon, pharangeal endoderm and trunk and tail mesoderm; mesoderm expression is in medial cells of each somite along the dorsoventral axis, forming stripes. At 48 hpf, expressed in forebrain, eye, midbrain and anterior hindbrain.

It is found in the nucleus. In terms of biological role, receptor for retinoic acid. Retinoic acid receptors bind as heterodimers to their target response elements in response to their ligands, all-trans or 9-cis retinoic acid, and regulate gene expression in various biological processes. The rar/rxr heterodimers bind to the retinoic acid response elements (RARE) composed of tandem 5'-AGGTCA-3' sites known as DR1-DR5. The high affinity ligand for rxrs is 9-cis retinoic acid. The sequence is that of Retinoic acid receptor RXR-beta-A (rxrba) from Danio rerio (Zebrafish).